Consider the following 63-residue polypeptide: Large ribosomal subunit protein uL30 (63 aa).

This sequence belongs to the universal ribosomal protein uL30 family. In terms of assembly, part of the 50S ribosomal subunit.

The sequence is that of Large ribosomal subunit protein uL30 from Xylella fastidiosa (strain M23).